We begin with the raw amino-acid sequence, 889 residues long: Disease resistance protein RPS5 (889 aa).

Gly2 carries the N-myristoyl glycine lipid modification. A lipid anchor (S-palmitoyl cysteine) is attached at Cys4. Residues Ile29–Glu58 are a coiled coil. One can recognise an NB-ARC domain in the interval Ser140–Gly444. An ATP-binding site is contributed by Gly183–Thr190. LRR repeat units lie at residues Thr518 to Ala539, Ala540 to Cys561, His564 to Leu586, Ser588 to Lys610, Lys611 to Trp633, and Asn634 to Gln656.

It belongs to the disease resistance NB-LRR family. As to quaternary structure, in uninfected plants, interacts with PBS1 through the coiled coil domain. Homodimer.

The protein localises to the cell membrane. Functionally, disease resistance (R) protein that specifically recognizes the avrPphB type III effector avirulence protein from Pseudomonas syringae. Also confers resistance against Hyaloperonospora parasitica (downy mildew). Resistance proteins guard the plant against pathogens that contain an appropriate avirulence protein via an indirect interaction with this avirulence protein. That triggers a defense system including the hypersensitive response, which restricts the pathogen growth. Requires PBS1 to trigger the defense reaction against avrPphB. In case of infection by Pseudomonas syringae, AvrPphB triggers RPS5-mediated defense mechanism via the cleavage of PBS1, suggesting that the cleavage of PBS1 could trigger an exchange of ADP for ATP, thereby activating RPS5. May function as a fine-tuned sensor of alterations in the structure of the effector target PBS1. This Arabidopsis thaliana (Mouse-ear cress) protein is Disease resistance protein RPS5 (RPS5).